The chain runs to 471 residues: Lincomycin resistance protein LmrB (471 aa).

Helical transmembrane passes span 13–35, 55–77, 84–106, 111–133, 140–162, 167–189, 201–223, 227–249, 269–291, 329–351, 358–380, and 445–467; these read PIPI…TALN, LTTG…LQWF, FTAV…FAML, VVQA…LIFP, AMGM…SGLI, TWNW…GMKF, IDIL…FSSA, GWGS…LFVW, FTLG…ILLP, AYGP…FFLT, SALT…MMPA, and GIQN…SLFI.

It belongs to the major facilitator superfamily. EmrB family.

It localises to the cell membrane. In terms of biological role, proton-dependent transporter. May mediate the efflux of lincomycin. This chain is Lincomycin resistance protein LmrB (lmrB), found in Listeria monocytogenes serovar 1/2a (strain ATCC BAA-679 / EGD-e).